A 285-amino-acid polypeptide reads, in one-letter code: MTATLIDGNALSKTLRAQAAKRAAALAARGHRPGLAVILVGDNPASEVYVRNKIKACEDNGFFSLKDRYPATLSEPELLARIGELNRDPKIHGILVQLPLPAHIDSHKVIEAIAPEKDVDGFHVANAGALLTGKPLFRPCTPYGVMKMFEAYKIPLQGANAVVIGRSNIVGKPMALLLLEAGATVTICHSKTRDLAAHTREADIVVAAVGKRNVLTADMVKPGATVIDVGMNRNDEGKLCGDVDFAGVSQVAGHITPVPGGVGPMTITMLLVNTIEAAERAAAAA.

NADP(+) contacts are provided by residues 165-167 (GRS) and Ser190.

The protein belongs to the tetrahydrofolate dehydrogenase/cyclohydrolase family. As to quaternary structure, homodimer.

The catalysed reaction is (6R)-5,10-methylene-5,6,7,8-tetrahydrofolate + NADP(+) = (6R)-5,10-methenyltetrahydrofolate + NADPH. The enzyme catalyses (6R)-5,10-methenyltetrahydrofolate + H2O = (6R)-10-formyltetrahydrofolate + H(+). Its pathway is one-carbon metabolism; tetrahydrofolate interconversion. In terms of biological role, catalyzes the oxidation of 5,10-methylenetetrahydrofolate to 5,10-methenyltetrahydrofolate and then the hydrolysis of 5,10-methenyltetrahydrofolate to 10-formyltetrahydrofolate. This is Bifunctional protein FolD from Burkholderia thailandensis (strain ATCC 700388 / DSM 13276 / CCUG 48851 / CIP 106301 / E264).